A 119-amino-acid polypeptide reads, in one-letter code: MRLSYIFVVVATIITNCDIASASLRAIMSDTASGNGLGTRILRQTNDSDDLEPIRHAMLDMELLEKIAKDPKYAEEVFGNWRHNGQTKAEMENRLQSNGLLGKYRFIIDRYAEHLANSE.

A signal peptide spans 1–22 (MRLSYIFVVVATIITNCDIASA). A RxLR-dEER motif is present at residues 40–77 (RILRQTNDSDDLEPIRHAMLDMELLEKIAKDPKYAEEV). The N-linked (GlcNAc...) asparagine glycan is linked to Asn46.

It belongs to the RxLR effector family.

The protein localises to the secreted. The protein resides in the host cytoplasm. It localises to the host nucleus. Its function is as follows. Secreted effector that suppresses pattern-triggered immunity (PTI) in plant host. The sequence is that of Secreted RxLR effector protein RXLR-C04 from Plasmopara halstedii (Downy mildew of sunflower).